The primary structure comprises 100 residues: uncharacterized protein (100 aa).

The 93-residue stretch at Met-8–Leu-100 folds into the HTH arsR-type domain. The segment at residues Cys-44–Glu-67 is a DNA-binding region (H-T-H motif).

This is an uncharacterized protein from Bacillus subtilis (strain 168).